The chain runs to 92 residues: Enhancer of yellow 2 transcription factor (92 aa).

This sequence belongs to the ENY2 family. Component of the nuclear pore complex (NPC)-associated TREX-2 complex (transcription and export complex 2). Component of the SAGA transcription coactivator-HAT complex. Within the SAGA complex, participates in a subcomplex of SAGA called the DUB module (deubiquitination module).

It localises to the nucleus. The protein resides in the nucleoplasm. Its function is as follows. Involved in mRNA export coupled transcription activation by association with both the TREX-2 and the SAGA complexes. The transcription regulatory histone acetylation (HAT) complex SAGA is a multiprotein complex that activates transcription by remodeling chromatin and mediating histone acetylation and deubiquitination. Within the SAGA complex, participates in a subcomplex that specifically deubiquitinates histones. The SAGA complex is recruited to specific gene promoters by activators, where it is required for transcription. The TREX-2 complex functions in docking export-competent ribonucleoprotein particles (mRNPs) to the nuclear entrance of the nuclear pore complex (nuclear basket). TREX-2 participates in mRNA export and accurate chromatin positioning in the nucleus by tethering genes to the nuclear periphery. The protein is Enhancer of yellow 2 transcription factor of Aedes aegypti (Yellowfever mosquito).